The following is a 65-amino-acid chain: Large ribosomal subunit protein bL33m (65 aa).

A mitochondrion-targeting transit peptide spans 1-8 (MLLSAVSF).

This sequence belongs to the bacterial ribosomal protein bL33 family. As to quaternary structure, component of the mitochondrial ribosome large subunit (39S) which comprises a 16S rRNA and about 50 distinct proteins.

Its subcellular location is the mitochondrion. This chain is Large ribosomal subunit protein bL33m (Mrpl33), found in Mus musculus (Mouse).